Consider the following 262-residue polypeptide: tRNA (guanine-N(7)-)-methyltransferase (262 aa).

A disordered region spans residues 1–58 (MLPQDTNTDPLPGDDAESASGKSADASQGTPNPGDEVAHPRRIRSFVRRAGRTSTGQQ). Basic residues predominate over residues 40–51 (PRRIRSFVRRAG). Positions 92, 117, 144, and 167 each coordinate S-adenosyl-L-methionine. Residue Asp167 is part of the active site. Residue Lys171 coordinates substrate. The interaction with RNA stretch occupies residues 173–178 (RHNKRR). Substrate-binding positions include Asp203 and 241–244 (TKFE).

The protein belongs to the class I-like SAM-binding methyltransferase superfamily. TrmB family.

The catalysed reaction is guanosine(46) in tRNA + S-adenosyl-L-methionine = N(7)-methylguanosine(46) in tRNA + S-adenosyl-L-homocysteine. It functions in the pathway tRNA modification; N(7)-methylguanine-tRNA biosynthesis. In terms of biological role, catalyzes the formation of N(7)-methylguanine at position 46 (m7G46) in tRNA. The chain is tRNA (guanine-N(7)-)-methyltransferase from Cupriavidus metallidurans (strain ATCC 43123 / DSM 2839 / NBRC 102507 / CH34) (Ralstonia metallidurans).